An 88-amino-acid chain; its full sequence is UPF0297 protein BLi02868/BL02032 (88 aa).

Belongs to the UPF0297 family.

The chain is UPF0297 protein BLi02868/BL02032 from Bacillus licheniformis (strain ATCC 14580 / DSM 13 / JCM 2505 / CCUG 7422 / NBRC 12200 / NCIMB 9375 / NCTC 10341 / NRRL NRS-1264 / Gibson 46).